Consider the following 118-residue polypeptide: BolA-like protein 3 (118 aa).

It belongs to the BolA/IbaG family. In terms of assembly, interacts with NFU1.

It localises to the mitochondrion matrix. Acts as a mitochondrial iron-sulfur (Fe-S) cluster assembly factor that facilitates [4Fe-4S] cluster insertion into a subset of mitochondrial proteins such as lipoyl synthase (LS) and succinate dehydrogenase (SDH). Required during the last step of iron-sulfur protein assembly when the iron-sulfur cluster is inserted into the target protein. Acts together with NFU1, later than BOL1 and GRX5 in the [4Fe-4S] cluster insertion process. Not required for [2Fe-2S] cluster insertion into mitochondrial proteins. The protein is BolA-like protein 3 of Saccharomyces cerevisiae (strain ATCC 204508 / S288c) (Baker's yeast).